The following is a 355-amino-acid chain: Probable GTP 3',8-cyclase (355 aa).

A Radical SAM core domain is found at 5–233 (AYGRPLKDLR…GRLHNRRVYR (229 aa)). GTP is bound at residue Arg-14. Residues Cys-21, Cys-25, and Cys-28 each coordinate [4Fe-4S] cluster. Lys-69 contacts GTP. Gly-73 lines the S-adenosyl-L-methionine pocket. Position 97 (Thr-97) interacts with GTP. An S-adenosyl-L-methionine-binding site is contributed by Ser-121. Residue Lys-157 coordinates GTP. Cys-252 and Cys-255 together coordinate [4Fe-4S] cluster. Residue 257-259 (RVR) participates in GTP binding. [4Fe-4S] cluster is bound at residue Cys-269.

The protein belongs to the radical SAM superfamily. MoaA family. It depends on [4Fe-4S] cluster as a cofactor.

It carries out the reaction GTP + AH2 + S-adenosyl-L-methionine = (8S)-3',8-cyclo-7,8-dihydroguanosine 5'-triphosphate + 5'-deoxyadenosine + L-methionine + A + H(+). It participates in cofactor biosynthesis; molybdopterin biosynthesis. Catalyzes the cyclization of GTP to (8S)-3',8-cyclo-7,8-dihydroguanosine 5'-triphosphate. This chain is Probable GTP 3',8-cyclase, found in Aeropyrum pernix (strain ATCC 700893 / DSM 11879 / JCM 9820 / NBRC 100138 / K1).